The chain runs to 437 residues: CCA-adding enzyme (437 aa).

Positions 47 and 50 each coordinate ATP. S47 and R50 together coordinate CTP. E59, D61, and D110 together coordinate Mg(2+). Residues H133, K152, and Y161 each contribute to the ATP site. Residues H133, K152, and Y161 each contribute to the CTP site.

The protein belongs to the tRNA nucleotidyltransferase/poly(A) polymerase family. Archaeal CCA-adding enzyme subfamily. As to quaternary structure, homodimer. Mg(2+) is required as a cofactor.

The enzyme catalyses a tRNA precursor + 2 CTP + ATP = a tRNA with a 3' CCA end + 3 diphosphate. It carries out the reaction a tRNA with a 3' CCA end + 2 CTP + ATP = a tRNA with a 3' CCACCA end + 3 diphosphate. In terms of biological role, catalyzes the addition and repair of the essential 3'-terminal CCA sequence in tRNAs without using a nucleic acid template. Adds these three nucleotides in the order of C, C, and A to the tRNA nucleotide-73, using CTP and ATP as substrates and producing inorganic pyrophosphate. tRNA 3'-terminal CCA addition is required both for tRNA processing and repair. Also involved in tRNA surveillance by mediating tandem CCA addition to generate a CCACCA at the 3' terminus of unstable tRNAs. While stable tRNAs receive only 3'-terminal CCA, unstable tRNAs are marked with CCACCA and rapidly degraded. The structural flexibility of RNA controls the choice between CCA versus CCACCA addition: following the first CCA addition cycle, nucleotide-binding to the active site triggers a clockwise screw motion, producing torque on the RNA. This ejects stable RNAs, whereas unstable RNAs are refolded while bound to the enzyme and subjected to a second CCA catalytic cycle. This Archaeoglobus fulgidus (strain ATCC 49558 / DSM 4304 / JCM 9628 / NBRC 100126 / VC-16) protein is CCA-adding enzyme.